The chain runs to 803 residues: Bifunctional enzyme MurC/Ddl (803 aa).

Residues 1–446 (MMKSLFYHFI…GEKLRDFEPQ (446 aa)) are UDP-N-acetylmuramate--alanine ligase. Residues 111-117 (GSHGKTT) and 600-655 (VEAF…CKEI) each bind ATP. The tract at residues 447–803 (KLHLGIICGG…SFVDQAFAIQ (357 aa)) is D-alanine--D-alanine ligase. The 212-residue stretch at 567–778 (KRFMSDLGIP…YEQIVHQLVI (212 aa)) folds into the ATP-grasp domain. 3 residues coordinate Mg(2+): Asp732, Glu745, and Asn747.

The protein in the N-terminal section; belongs to the MurCDEF family. This sequence in the C-terminal section; belongs to the D-alanine--D-alanine ligase family. It depends on Mg(2+) as a cofactor. The cofactor is Mn(2+).

Its subcellular location is the cytoplasm. The catalysed reaction is UDP-N-acetyl-alpha-D-muramate + L-alanine + ATP = UDP-N-acetyl-alpha-D-muramoyl-L-alanine + ADP + phosphate + H(+). It catalyses the reaction 2 D-alanine + ATP = D-alanyl-D-alanine + ADP + phosphate + H(+). The protein operates within cell wall biogenesis; peptidoglycan biosynthesis. Cell wall formation. The chain is Bifunctional enzyme MurC/Ddl (murC/ddl) from Chlamydia trachomatis serovar D (strain ATCC VR-885 / DSM 19411 / UW-3/Cx).